A 156-amino-acid chain; its full sequence is Phospholipase A2 A2-hormotoxin-Apt1a (156 aa).

An N-terminal signal peptide occupies residues 1-19; sequence MQLYTYFFTFSLVLILALA. Positions 20–35 are excised as a propeptide; the sequence is DQENKSLDFTQEGGIA. 5 disulfides stabilise this stretch: cysteine 62–cysteine 156, cysteine 64–cysteine 80, cysteine 79–cysteine 138, cysteine 86–cysteine 131, and cysteine 115–cysteine 129. The Ca(2+) site is built by glycine 65 and glycine 67. Histidine 83 is a catalytic residue. Aspartate 84 is a binding site for Ca(2+). Aspartate 132 is a catalytic residue.

Belongs to the phospholipase A2 family. The cofactor is Ca(2+).

The protein resides in the secreted. It is found in the nematocyst. It carries out the reaction a 1,2-diacyl-sn-glycero-3-phosphocholine + H2O = a 1-acyl-sn-glycero-3-phosphocholine + a fatty acid + H(+). Sea anemone phospholipase A2 (PLA2) that may have a role both in defense and in digestion, since its expression and enzymatic activity were found both in the acontia (defensive organs) and tentacles. PLA2 catalyzes the calcium-dependent hydrolysis of the 2-acyl groups in 3-sn-phosphoglycerides. This is Phospholipase A2 A2-hormotoxin-Apt1a from Adamsia palliata (Cloak anemone).